Here is a 293-residue protein sequence, read N- to C-terminus: Acetyl-coenzyme A carboxylase carboxyl transferase subunit beta (293 aa).

Positions 29 to 293 (LWSKCPECGL…GCRPMEITSA (265 aa)) constitute a CoA carboxyltransferase N-terminal domain. Residues cysteine 33, cysteine 36, cysteine 52, and cysteine 55 each contribute to the Zn(2+) site. The C4-type zinc finger occupies 33 to 55 (CPECGLVVYVKDLKGNASVCAGC).

It belongs to the AccD/PCCB family. Acetyl-CoA carboxylase is a heterohexamer composed of biotin carboxyl carrier protein (AccB), biotin carboxylase (AccC) and two subunits each of ACCase subunit alpha (AccA) and ACCase subunit beta (AccD). It depends on Zn(2+) as a cofactor.

Its subcellular location is the cytoplasm. The enzyme catalyses N(6)-carboxybiotinyl-L-lysyl-[protein] + acetyl-CoA = N(6)-biotinyl-L-lysyl-[protein] + malonyl-CoA. Its pathway is lipid metabolism; malonyl-CoA biosynthesis; malonyl-CoA from acetyl-CoA: step 1/1. Its function is as follows. Component of the acetyl coenzyme A carboxylase (ACC) complex. Biotin carboxylase (BC) catalyzes the carboxylation of biotin on its carrier protein (BCCP) and then the CO(2) group is transferred by the transcarboxylase to acetyl-CoA to form malonyl-CoA. This is Acetyl-coenzyme A carboxylase carboxyl transferase subunit beta from Parasynechococcus marenigrum (strain WH8102).